Here is a 402-residue protein sequence, read N- to C-terminus: Putative F-box/kelch-repeat protein At1g61540 (402 aa).

An F-box domain is found at 24 to 70 (PISIMSLPYDLLLNCFSLVSRLYYPTLSLVSKTFRSIITSRELYEIR). Kelch repeat units lie at residues 135–189 (NIYK…CEVD), 191–240 (KIYI…EVKS), and 246–293 (KIYM…VVDN).

The polypeptide is Putative F-box/kelch-repeat protein At1g61540 (Arabidopsis thaliana (Mouse-ear cress)).